The primary structure comprises 178 residues: Ribosome maturation factor RimM (178 aa).

One can recognise a PRC barrel domain in the interval 95 to 174 (EGQHFWFNVI…IVHVKDAKDI (80 aa)).

It belongs to the RimM family. Binds ribosomal protein uS19.

It localises to the cytoplasm. In terms of biological role, an accessory protein needed during the final step in the assembly of 30S ribosomal subunit, possibly for assembly of the head region. Essential for efficient processing of 16S rRNA. May be needed both before and after RbfA during the maturation of 16S rRNA. It has affinity for free ribosomal 30S subunits but not for 70S ribosomes. In Sulfurovum sp. (strain NBC37-1), this protein is Ribosome maturation factor RimM.